The following is a 304-amino-acid chain: Cbb3-type cytochrome c oxidase subunit CcoP (304 aa).

2 consecutive transmembrane segments (helical) span residues 11–31 (LYVAGITVVSLIFCLVVLIVA) and 61–81 (WWAGLFLVTIAFAVIYLALYP). Cytochrome c domains follow at residues 129–209 (QAMA…LSLS) and 216–296 (VAAQ…WSLS). Heme c-binding residues include Cys-142, Cys-145, His-146, Met-185, Cys-228, Cys-231, His-232, and Met-273.

It belongs to the CcoP / FixP family. In terms of assembly, component of the cbb3-type cytochrome c oxidase at least composed of CcoN, CcoO, CcoQ and CcoP. It depends on heme c as a cofactor.

The protein resides in the cell inner membrane. It functions in the pathway energy metabolism; oxidative phosphorylation. In terms of biological role, C-type cytochrome. Part of the cbb3-type cytochrome c oxidase complex. CcoP subunit is required for transferring electrons from donor cytochrome c via its heme groups to CcoO subunit. From there, electrons are shuttled to the catalytic binuclear center of CcoN subunit where oxygen reduction takes place. The complex also functions as a proton pump. This is Cbb3-type cytochrome c oxidase subunit CcoP from Rubrivivax gelatinosus (Rhodocyclus gelatinosus).